The primary structure comprises 582 residues: NAB transcription cofactor mab-10 (582 aa).

The span at 1 to 70 (MSSSSSSSLP…SSSSQRQSTS (70 aa)) shows a compositional bias: low complexity. Disordered regions lie at residues 1–84 (MSSS…MPTP), 257–287 (SDQQ…PAGI), 333–365 (PPSS…SPFL), and 516–582 (SRKR…LPES). Positions 83-161 (TPTTLSEWQL…EYSQDQTAFN (79 aa)) are NCD1. Low complexity-rich tracts occupy residues 257–276 (SDQQ…STSS) and 333–345 (PPSS…PSTS). An NCD2 region spans residues 396-519 (LSTAQISRLA…GYNYAKSRKR (124 aa)). Positions 573–582 (EKMKGELPES) are enriched in basic and acidic residues.

Belongs to the NAB family. As to quaternary structure, interacts with transcription factor lin-29 (via C-terminus).

It is found in the nucleus. Transcriptional cofactor. Heterochronic protein, involved in timing of a subset of differentiation events during the larval-to-adult transition. Promotes hypodermal terminal differentiation, together with transcription factor lin-29, perhaps as part of a transcriptional complex. Involved in regulating molting by repressing the expression of nuclear hormone receptors nhr-23 and nhr-25 in the adult hypoderm, probably acting in concert with lin-29. In Caenorhabditis elegans, this protein is NAB transcription cofactor mab-10.